We begin with the raw amino-acid sequence, 104 residues long: Large ribosomal subunit protein bL21 (104 aa).

It belongs to the bacterial ribosomal protein bL21 family. Part of the 50S ribosomal subunit. Contacts protein L20.

This protein binds to 23S rRNA in the presence of protein L20. This is Large ribosomal subunit protein bL21 from Allorhizobium ampelinum (strain ATCC BAA-846 / DSM 112012 / S4) (Agrobacterium vitis (strain S4)).